The primary structure comprises 68 residues: Serine palmitoyltransferase small subunit A (68 aa).

The Cytoplasmic segment spans residues 1–9; it reads MAFGDAWKQ. A helical transmembrane segment spans residues 10–26; the sequence is LSWFYYQYLLVTALYML. Topologically, residues 27 to 31 are lumenal; the sequence is EPWER. The helical transmembrane segment at 32-54 threads the bilayer; that stretch reads TIFNSLLISVAAMAVYTGYVFMP. Residues 55–68 are Cytoplasmic-facing; the sequence is QHIMAILHYFEVVQ.

It belongs to the SPTSS family. SPTSSA subfamily. As to quaternary structure, component of the serine palmitoyltransferase (SPT) complex, which is composed of SPTLC1, SPTLC2 or SPTLC3 and SPTSSA or SPTSSB. The heterodimer consisting of SPTLC1 and SPTLC2/SPTLC3 forms the catalytic core of the enzyme, while SPTSSA or SPTSSB subunits determine substrate specificity. SPT also interacts with ORMDL proteins, especially ORMDL3, which negatively regulate SPT activity in the presence of ceramides.

It localises to the endoplasmic reticulum membrane. The protein operates within lipid metabolism; sphingolipid metabolism. Functionally, component of the serine palmitoyltransferase multisubunit enzyme (SPT) that catalyzes the initial and rate-limiting step in sphingolipid biosynthesis by condensing L-serine and activated acyl-CoA (most commonly palmitoyl-CoA) to form long-chain bases. The SPT complex is composed of SPTLC1, SPTLC2 or SPTLC3 and SPTSSA or SPTSSB. Within this complex, the heterodimer consisting of SPTLC1 and SPTLC2/SPTLC3 forms the catalytic core. Within the SPT complex, SPTSSA stimulates the catalytic activity and plays a role in substrate specificity, which depends upon the overall complex composition. The SPTLC1-SPTLC2-SPTSSA complex shows a strong preference for C16-CoA substrate, while the SPTLC1-SPTLC3-SPTSSA isozyme uses both C14-CoA and C16-CoA as substrates, with a slight preference for C14-CoA. Independently of its action as a SPT component, may be involved in MBOAT7 localization to mitochondria-associated membranes, a membrane bridge between the endoplasmic reticulum and mitochondria, may hence affect MBOAT7-catalyzed incorporation of arachidonic acid into phosphatidylinositol. The sequence is that of Serine palmitoyltransferase small subunit A (sptssa) from Danio rerio (Zebrafish).